We begin with the raw amino-acid sequence, 397 residues long: Protein irld-34 (397 aa).

The protein is Protein irld-34 of Caenorhabditis elegans.